Here is a 23-residue protein sequence, read N- to C-terminus: Potassium channel toxin kappa-KTx 2.3 (23 aa).

Intrachain disulfides connect Cys4/Cys22 and Cys8/Cys18.

The protein belongs to the short scorpion toxin superfamily. Potassium channel inhibitor kappa-KTx family. Kappa-KTx 2 subfamily. As to expression, expressed by the venom gland.

It is found in the secreted. In terms of biological role, decreases the amplitude of the potassium current of the rat channels Kv1.1/KCNA1 by 33% and Kv1.2/KCNA2 by 8% as well as human Kv1.3/KCNA3 by 70%. This Opisthacanthus madagascariensis (Scorpion) protein is Potassium channel toxin kappa-KTx 2.3.